Reading from the N-terminus, the 45-residue chain is Large ribosomal subunit protein bL34 (45 aa).

This sequence belongs to the bacterial ribosomal protein bL34 family.

This is Large ribosomal subunit protein bL34 from Kineococcus radiotolerans (strain ATCC BAA-149 / DSM 14245 / SRS30216).